The primary structure comprises 433 residues: MKEVDVVGAGLAGAEAAWQLAKRGIKVRLFEMRPKKFTPAHQTPLFAELVCSNSLGGINLDNAAGLLKEELRFLDSLVIKVADRNRIPAGNALAVDRNLFAEEVTLRLSHHPLIEVIREEVVDINPERVTVIASGPLTSKALAENLKKYLESDYLYFFDAVAPIVAGESLDMEKLFFAGRYQQDKDYLNAPMNEEEYLRFYEALITAERHPLKPFEKDIYYEGCLPIEVIASRGKDTLRFGPLKPKGIIDPRTGKEPYAVVQLRRENLAGDYYNLVGFQTNLTWKEQNRVFRLIPGLENAEFIRFGVMHKNTFINSPALLTPYLNLKKYPRLFFAGQITGGEGYVAAIATGAWAGIAASGMFGKMPEPLPETTMLGGLIRYLNTAPVENFQPMGVNFGLVKPLDRKIKNKKERYKLLAERSLKDLKRWLAVNG.

Position 8 to 13 (8 to 13) interacts with FAD; sequence GAGLAG.

It belongs to the MnmG family. TrmFO subfamily. FAD serves as cofactor.

It is found in the cytoplasm. It catalyses the reaction uridine(54) in tRNA + (6R)-5,10-methylene-5,6,7,8-tetrahydrofolate + NADH + H(+) = 5-methyluridine(54) in tRNA + (6S)-5,6,7,8-tetrahydrofolate + NAD(+). The catalysed reaction is uridine(54) in tRNA + (6R)-5,10-methylene-5,6,7,8-tetrahydrofolate + NADPH + H(+) = 5-methyluridine(54) in tRNA + (6S)-5,6,7,8-tetrahydrofolate + NADP(+). In terms of biological role, catalyzes the folate-dependent formation of 5-methyl-uridine at position 54 (M-5-U54) in all tRNAs. This is Methylenetetrahydrofolate--tRNA-(uracil-5-)-methyltransferase TrmFO from Carboxydothermus hydrogenoformans (strain ATCC BAA-161 / DSM 6008 / Z-2901).